Here is a 107-residue protein sequence, read N- to C-terminus: Phosphoribosyl-ATP pyrophosphatase (107 aa).

The protein belongs to the PRA-PH family.

The protein localises to the cytoplasm. It carries out the reaction 1-(5-phospho-beta-D-ribosyl)-ATP + H2O = 1-(5-phospho-beta-D-ribosyl)-5'-AMP + diphosphate + H(+). It participates in amino-acid biosynthesis; L-histidine biosynthesis; L-histidine from 5-phospho-alpha-D-ribose 1-diphosphate: step 2/9. The polypeptide is Phosphoribosyl-ATP pyrophosphatase (Bacillus cereus (strain Q1)).